Here is a 46-residue protein sequence, read N- to C-terminus: DNA-directed RNA polymerase subunit Rpo12 (46 aa).

Residues cysteine 8, cysteine 23, and cysteine 26 each coordinate Zn(2+).

The protein belongs to the archaeal Rpo12/eukaryotic RPC10 RNA polymerase subunit family. Part of the RNA polymerase complex. Requires Zn(2+) as cofactor.

It localises to the cytoplasm. It catalyses the reaction RNA(n) + a ribonucleoside 5'-triphosphate = RNA(n+1) + diphosphate. Functionally, DNA-dependent RNA polymerase (RNAP) catalyzes the transcription of DNA into RNA using the four ribonucleoside triphosphates as substrates. The sequence is that of DNA-directed RNA polymerase subunit Rpo12 from Archaeoglobus fulgidus (strain ATCC 49558 / DSM 4304 / JCM 9628 / NBRC 100126 / VC-16).